Here is a 635-residue protein sequence, read N- to C-terminus: Threonine--tRNA ligase (635 aa).

The region spanning 1–62 is the TGS domain; it reads MITITLPDGS…EHDAILRIIT (62 aa). The interval 244–535 is catalytic; the sequence is DHRKIGKAQD…LIEHYAGIWP (292 aa). Zn(2+) contacts are provided by cysteine 335, histidine 386, and histidine 512.

It belongs to the class-II aminoacyl-tRNA synthetase family. As to quaternary structure, homodimer. It depends on Zn(2+) as a cofactor.

It is found in the cytoplasm. The catalysed reaction is tRNA(Thr) + L-threonine + ATP = L-threonyl-tRNA(Thr) + AMP + diphosphate + H(+). Functionally, catalyzes the attachment of threonine to tRNA(Thr) in a two-step reaction: L-threonine is first activated by ATP to form Thr-AMP and then transferred to the acceptor end of tRNA(Thr). Also edits incorrectly charged L-seryl-tRNA(Thr). The protein is Threonine--tRNA ligase of Xylella fastidiosa (strain M12).